The sequence spans 449 residues: MTRPSVKLLTTLLACLMEMLNFRVSSGKDPDLLSSSSSSMSPSDFLDKLMGRTSGYDARIRPNFKGPPVNVTCNIFINSFGSVTETTMDYRVNIFLRQKWNDPRLAYSEYPDSSLDLDPSMLDSIWKPDLFFANEKGANFHDVTTDNKLLRIFKDGTVLYSIRLTLILSCPMDLKNFPMDVQTCTMQLESFGYTMNDLIFEWLDKGPVQVADGLTLPQFLIRDEKDLGYCTKHYNTGKFTCIEVKFHLERQMGYYLIQMYIPSLLIVILSWVSFWINMDAAPARVALGITTVLTMTTQSSGSRASLPKVSYVKAIDIWMAVCLLFVFAALLEYAGVNFVSRQQKEFLRLKRRQRRTQKEEDLQDGRLHFSSYNTTTCVKDGAVVKNTQVNQIQQPSILKNTETNRKKFVDRAKRIDTISRAAFPLAFLIFNVFYWITYKIIRHESARKD.

An N-terminal signal peptide occupies residues 1-27 (MTRPSVKLLTTLLACLMEMLNFRVSSG). Topologically, residues 28–255 (KDPDLLSSSS…FHLERQMGYY (228 aa)) are extracellular. N-linked (GlcNAc...) asparagine glycosylation occurs at Asn-70. Residues Arg-97 and Ser-161 each coordinate glycine. Position 97 (Arg-97) interacts with strychnine. The cysteines at positions 170 and 184 are disulfide-linked. Glu-224 and Asp-226 together coordinate Zn(2+). A disulfide bridge connects residues Cys-230 and Cys-241. Thr-236 is a binding site for glycine. A Zn(2+)-binding site is contributed by His-247. The helical transmembrane segment at 256–276 (LIQMYIPSLLIVILSWVSFWI) threads the bilayer. The Cytoplasmic portion of the chain corresponds to 277-282 (NMDAAP). The chain crosses the membrane as a helical span at residues 283-302 (ARVALGITTVLTMTTQSSGS). Residues 303–313 (RASLPKVSYVK) are Extracellular-facing. Residues 314–334 (AIDIWMAVCLLFVFAALLEYA) form a helical membrane-spanning segment. The Cytoplasmic portion of the chain corresponds to 335–420 (GVNFVSRQQK…RAKRIDTISR (86 aa)). The chain crosses the membrane as a helical span at residues 421-441 (AAFPLAFLIFNVFYWITYKII). Residues 442 to 449 (RHESARKD) lie on the Extracellular side of the membrane.

It belongs to the ligand-gated ion channel (TC 1.A.9) family.

The protein localises to the postsynaptic cell membrane. It localises to the synapse. It is found in the cell membrane. The protein resides in the cell projection. The catalysed reaction is chloride(in) = chloride(out). Its activity is regulated as follows. Channel opening is triggered by extracellular glycine. Channel opening is also triggered by taurine and beta-alanine. Inhibited by strychnine. Subunit of heteromeric glycine-gated chloride channels. Plays a role in synaptic plasticity. Contributes to the generation of inhibitory postsynaptic currents, and is involved in the down-regulation of neuronal excitability. In Danio rerio (Zebrafish), this protein is Glycine receptor subunit alpha-2 (glra2).